Consider the following 424-residue polypeptide: UPF0597 protein Sbal_3070 (424 aa).

The protein belongs to the UPF0597 family.

The polypeptide is UPF0597 protein Sbal_3070 (Shewanella baltica (strain OS155 / ATCC BAA-1091)).